The chain runs to 487 residues: Structure-specific endonuclease subunit SLX1 (487 aa).

The region spanning 27 to 109 (PFYACYLLRS…QKPELSRHLR (83 aa)) is the GIY-YIG domain. The tract at residues 44–69 (RTYVGSTPDPPRRIRQHNGELKQGAW) is disordered. An SLX1-type zinc finger spans residues 262–328 (CHLCQERIAF…LPYQGLCPNC (67 aa)). The span at 359–396 (KAEKAEKAEKAEKAEKAEKAEKAGRKVRQREMKTKKGD) shows a compositional bias: basic and acidic residues. 2 disordered regions span residues 359–407 (KAEK…QPES) and 433–475 (PARS…SEPE). The span at 397 to 407 (QSNGTVAQPES) shows a compositional bias: polar residues. Residues 438 to 455 (KSKDVGGEGIRHSTHTDD) are compositionally biased toward basic and acidic residues. The span at 465-475 (ETEDESESEPE) shows a compositional bias: acidic residues.

It belongs to the SLX1 family. Forms a heterodimer with SLX4. A divalent metal cation serves as cofactor.

It localises to the nucleus. Catalytic subunit of the SLX1-SLX4 structure-specific endonuclease that resolves DNA secondary structures generated during DNA repair and recombination. Has endonuclease activity towards branched DNA substrates, introducing single-strand cuts in duplex DNA close to junctions with ss-DNA. This chain is Structure-specific endonuclease subunit SLX1, found in Cryptococcus neoformans var. neoformans serotype D (strain B-3501A) (Filobasidiella neoformans).